Here is a 282-residue protein sequence, read N- to C-terminus: 4-deoxy-L-threo-5-hexosulose-uronate ketol-isomerase 2 (282 aa).

Zn(2+)-binding residues include histidine 200, histidine 202, glutamate 207, and histidine 249.

The protein belongs to the KduI family. Zn(2+) is required as a cofactor.

The catalysed reaction is 5-dehydro-4-deoxy-D-glucuronate = 3-deoxy-D-glycero-2,5-hexodiulosonate. It participates in glycan metabolism; pectin degradation; 2-dehydro-3-deoxy-D-gluconate from pectin: step 4/5. Its function is as follows. Catalyzes the isomerization of 5-dehydro-4-deoxy-D-glucuronate to 3-deoxy-D-glycero-2,5-hexodiulosonate. The protein is 4-deoxy-L-threo-5-hexosulose-uronate ketol-isomerase 2 (kduI2) of Rhizobium meliloti (strain 1021) (Ensifer meliloti).